Reading from the N-terminus, the 289-residue chain is Acetyl-coenzyme A carboxylase carboxyl transferase subunit beta (289 aa).

The CoA carboxyltransferase N-terminal domain occupies 28–289 (VMTKCPKCKK…QGGEMAVWQS (262 aa)). The Zn(2+) site is built by Cys-32, Cys-35, Cys-51, and Cys-54. The segment at 32-54 (CPKCKKIMYTKEVLKNLKVCVNC) adopts a C4-type zinc-finger fold.

Belongs to the AccD/PCCB family. Acetyl-CoA carboxylase is a heterohexamer composed of biotin carboxyl carrier protein (AccB), biotin carboxylase (AccC) and two subunits each of ACCase subunit alpha (AccA) and ACCase subunit beta (AccD). Zn(2+) serves as cofactor.

Its subcellular location is the cytoplasm. The enzyme catalyses N(6)-carboxybiotinyl-L-lysyl-[protein] + acetyl-CoA = N(6)-biotinyl-L-lysyl-[protein] + malonyl-CoA. Its pathway is lipid metabolism; malonyl-CoA biosynthesis; malonyl-CoA from acetyl-CoA: step 1/1. Its function is as follows. Component of the acetyl coenzyme A carboxylase (ACC) complex. Biotin carboxylase (BC) catalyzes the carboxylation of biotin on its carrier protein (BCCP) and then the CO(2) group is transferred by the transcarboxylase to acetyl-CoA to form malonyl-CoA. This Bacillus cereus (strain ZK / E33L) protein is Acetyl-coenzyme A carboxylase carboxyl transferase subunit beta.